The primary structure comprises 285 residues: MDADELELKGHLKKLKKEELLRRKQLKESNLQKRELEYNNASKNTSIYISGLPTDKTTKEGLTEQFCKYGMIRTNRDGEPLCKLYVNDKGAFKGDALITYSKEESVTLAIEMMNESIFLGKQIRVERAQFQNKEGDNMHGKENDLKEFNGPEPPIKRLKKAKSEGEGEVIDYNDDESLAKADRTVIFANVFNIYKSYTNDDINDIQEDLLEGCEEIGQVDSISVSPNKGEATVVFKNNKVALQCCKIMTGRYFDGQKLLAFISGDENTSSTSDKNEDSEVEDDLI.

In terms of domain architecture, RRM 1 spans 45-130; sequence TSIYISGLPT…KQIRVERAQF (86 aa). Basic and acidic residues predominate over residues 135–149; it reads GDNMHGKENDLKEFN. The interval 135–154 is disordered; that stretch reads GDNMHGKENDLKEFNGPEPP. S163 bears the Phosphoserine mark. An RRM 2 domain is found at 183 to 265; that stretch reads RTVIFANVFN…QKLLAFISGD (83 aa). The segment at 265 to 285 is disordered; it reads DENTSSTSDKNEDSEVEDDLI. Over residues 276 to 285 the composition is skewed to acidic residues; that stretch reads EDSEVEDDLI.

It belongs to the HTATSF1 family. Interacts with PRP11. Associates with the U2 snRNA.

Functionally, U2 snRNP protein which helps to refold U2 into a structure favorable for its binding to SF3b and SF3a prior to spliceosome assembly. Mediates functional interactions between U2 RNA and PRP5. Enforces ATP dependence during formation of the prespliceosome by brokering an interaction between PRP5 and the U2 snRNP that depends on correct U2 RNA structure. The protein is Cold sensitive U2 snRNA suppressor 2 (CUS2) of Saccharomyces cerevisiae (strain ATCC 204508 / S288c) (Baker's yeast).